Here is a 111-residue protein sequence, read N- to C-terminus: Small ubiquitin-related modifier 3 (111 aa).

Residues 16 to 93 (AHVILKVKSQ…IDACRAMSGG (78 aa)) enclose the Ubiquitin-like domain. Gly-93 participates in a covalent cross-link: Glycyl lysine isopeptide (Gly-Lys) (interchain with K-? in acceptor proteins).

It belongs to the ubiquitin family. SUMO subfamily. Interacts with SAE2, SCE1, SIZ1 and MMS21. Covalently attached to a number of proteins. Interacts with NPR1; this interaction promotes NPR1 phosphorylation and triggers its sumoylation and subsequent degradation.

It is found in the nucleus. The protein localises to the cytoplasm. Ubiquitin-like protein which can be covalently attached to target lysines as a monomer. Does not seem to be involved in protein degradation and may function as an antagonist of ubiquitin in the degradation process. Promotes NPR1 sumoylation to activate defense gene expression and regulate its degradation. This chain is Small ubiquitin-related modifier 3, found in Arabidopsis thaliana (Mouse-ear cress).